Here is a 470-residue protein sequence, read N- to C-terminus: Uronate isomerase (470 aa).

It belongs to the metallo-dependent hydrolases superfamily. Uronate isomerase family.

The catalysed reaction is D-glucuronate = D-fructuronate. It carries out the reaction aldehydo-D-galacturonate = keto-D-tagaturonate. Its pathway is carbohydrate metabolism; pentose and glucuronate interconversion. In Shigella boydii serotype 18 (strain CDC 3083-94 / BS512), this protein is Uronate isomerase.